We begin with the raw amino-acid sequence, 423 residues long: Glucose-1-phosphate adenylyltransferase (423 aa).

Alpha-D-glucose 1-phosphate is bound by residues Tyr108, Gly173, 188–189 (EK), and Ser207.

Belongs to the bacterial/plant glucose-1-phosphate adenylyltransferase family. Homotetramer.

The catalysed reaction is alpha-D-glucose 1-phosphate + ATP + H(+) = ADP-alpha-D-glucose + diphosphate. The protein operates within glycan biosynthesis; glycogen biosynthesis. Functionally, involved in the biosynthesis of ADP-glucose, a building block required for the elongation reactions to produce glycogen. Catalyzes the reaction between ATP and alpha-D-glucose 1-phosphate (G1P) to produce pyrophosphate and ADP-Glc. This Francisella tularensis subsp. tularensis (strain WY96-3418) protein is Glucose-1-phosphate adenylyltransferase.